Reading from the N-terminus, the 384-residue chain is Probable E3 ubiquitin-protein ligase rnf113 (384 aa).

A compositionally biased stretch (basic residues) spans Met-1–Asn-11. Positions Met-1–Ala-96 are disordered. Positions Pro-42 to Ala-52 are enriched in polar residues. Positions Ser-60–Gln-71 are enriched in acidic residues. Residues Asp-175–Ser-203 form a C3H1-type zinc finger. An RING-type zinc finger spans residues Cys-241–Gln-279. Positions Lys-299–Asp-384 are disordered. 2 stretches are compositionally biased toward basic and acidic residues: residues Gln-303–Glu-312 and Glu-320–Glu-334. Residues Glu-351–Asp-384 show a composition bias toward acidic residues.

The enzyme catalyses S-ubiquitinyl-[E2 ubiquitin-conjugating enzyme]-L-cysteine + [acceptor protein]-L-lysine = [E2 ubiquitin-conjugating enzyme]-L-cysteine + N(6)-ubiquitinyl-[acceptor protein]-L-lysine.. Its pathway is protein modification; protein ubiquitination. May function as E3 ubiquitin-protein ligase that catalyzes the transfer of ubiquitin onto target proteins. May play a role in DNA repair via its role in the synthesis of 'Lys-63'-linked polyubiquitin chains that recruit proteins involved in repair to sites of DNA damage by alkylating agents. This Caenorhabditis elegans protein is Probable E3 ubiquitin-protein ligase rnf113 (rnf-113).